We begin with the raw amino-acid sequence, 596 residues long: Neuroepithelial cell-transforming gene 1 protein (596 aa).

N-acetylmethionine is present on Met-1. The disordered stretch occupies residues 1 to 44 (MEPELAAQKQPRPRRRSRRASGLSTEGATGPSADTSGSELDGRC). Residues 1–74 (MEPELAAQKQ…LKRKRREKDD (74 aa)) are necessary for nuclear localization. The short motif at 12-19 (RPRRRSRR) is the Nuclear localization signal element. Phosphoserine occurs at positions 21 and 32. Polar residues predominate over residues 22–38 (GLSTEGATGPSADTSGS). A Nuclear localization signal motif is present at residues 66–72 (KRKRREK). A phosphoserine mark is found at Ser-100, Ser-106, and Ser-122. A disordered region spans residues 127-146 (GDHRSPASAQKFSSRSTVPT). A compositionally biased stretch (polar residues) spans 133 to 145 (ASAQKFSSRSTVP). The 183-residue stretch at 174–356 (RRQEAIYEMS…QGVLSDINLK (183 aa)) folds into the DH domain. A PH domain is found at 386 to 501 (VLLCHGELRS…WFNCIRAAIA (116 aa)). Ser-508 is modified (phosphoserine). The tract at residues 562-596 (MAEDSKSLKTHQTQPGIRRARDKALSGGKRKETLV) is disordered.

Interacts with RHOA in its GTP- and GDP-bound states, and with CDC42 in its GTP-bound state. Interacts with the PDZ 1 domain of BAIAP1. As to expression, widely expressed.

Its subcellular location is the cytoplasm. The protein resides in the nucleus. Acts as a guanine nucleotide exchange factor (GEF) for RhoA GTPase. May be involved in activation of the SAPK/JNK pathway Stimulates genotoxic stress-induced RHOB activity in breast cancer cells leading to their cell death. The chain is Neuroepithelial cell-transforming gene 1 protein (NET1) from Homo sapiens (Human).